A 209-amino-acid polypeptide reads, in one-letter code: Thymidine kinase (209 aa).

ATP-binding positions include 25-32 (GCMFAGKT) and 103-106 (DEVQ). Glu-104 acts as the Proton acceptor in catalysis. 4 residues coordinate Zn(2+): Cys-160, Cys-163, Cys-198, and Cys-201.

Belongs to the thymidine kinase family. Homotetramer.

It is found in the cytoplasm. The enzyme catalyses thymidine + ATP = dTMP + ADP + H(+). The chain is Thymidine kinase from Mycoplasma mycoides subsp. mycoides SC (strain CCUG 32753 / NCTC 10114 / PG1).